The chain runs to 160 residues: Phosphopantetheine adenylyltransferase (160 aa).

Threonine 11 is a substrate binding site. ATP-binding positions include 11–12 (TF) and histidine 19. Substrate-binding residues include lysine 43, leucine 75, and arginine 89. ATP is bound by residues 90-92 (GLR), glutamate 100, and 125-131 (HMFVSAS).

It belongs to the bacterial CoaD family. Homohexamer. The cofactor is Mg(2+).

The protein resides in the cytoplasm. It carries out the reaction (R)-4'-phosphopantetheine + ATP + H(+) = 3'-dephospho-CoA + diphosphate. Its pathway is cofactor biosynthesis; coenzyme A biosynthesis; CoA from (R)-pantothenate: step 4/5. Functionally, reversibly transfers an adenylyl group from ATP to 4'-phosphopantetheine, yielding dephospho-CoA (dPCoA) and pyrophosphate. The sequence is that of Phosphopantetheine adenylyltransferase from Methylobacillus flagellatus (strain ATCC 51484 / DSM 6875 / VKM B-1610 / KT).